Here is a 185-residue protein sequence, read N- to C-terminus: Elongation factor P (185 aa).

Belongs to the elongation factor P family.

It localises to the cytoplasm. It participates in protein biosynthesis; polypeptide chain elongation. Functionally, involved in peptide bond synthesis. Stimulates efficient translation and peptide-bond synthesis on native or reconstituted 70S ribosomes in vitro. Probably functions indirectly by altering the affinity of the ribosome for aminoacyl-tRNA, thus increasing their reactivity as acceptors for peptidyl transferase. This Endomicrobium trichonymphae protein is Elongation factor P.